The primary structure comprises 282 residues: Undecaprenyl-diphosphatase (282 aa).

7 helical membrane-spanning segments follow: residues 40–60 (GAAF…MYFW), 85–105 (ARMG…GLLF), 115–135 (SLYW…LAEW), 153–173 (IGWK…IPGS), 193–213 (AARF…IFQL), 230–250 (LAAA…FLLS), and 258–278 (TIFI…LSTG).

It belongs to the UppP family.

The protein localises to the cell inner membrane. It carries out the reaction di-trans,octa-cis-undecaprenyl diphosphate + H2O = di-trans,octa-cis-undecaprenyl phosphate + phosphate + H(+). Catalyzes the dephosphorylation of undecaprenyl diphosphate (UPP). Confers resistance to bacitracin. In Chlorobium phaeovibrioides (strain DSM 265 / 1930) (Prosthecochloris vibrioformis (strain DSM 265)), this protein is Undecaprenyl-diphosphatase.